Reading from the N-terminus, the 118-residue chain is Basic phospholipase A2 PA-10A (118 aa).

Cystine bridges form between C11–C71, C27–C117, C29–C45, C44–C98, C51–C91, C60–C84, and C78–C89. Ca(2+)-binding residues include Y28, G30, and G32. Residue H48 is part of the active site. D49 lines the Ca(2+) pocket. Residue D92 is part of the active site.

The protein belongs to the phospholipase A2 family. Group I subfamily. D49 sub-subfamily. Requires Ca(2+) as cofactor. As to expression, expressed by the venom gland.

It localises to the secreted. The enzyme catalyses a 1,2-diacyl-sn-glycero-3-phosphocholine + H2O = a 1-acyl-sn-glycero-3-phosphocholine + a fatty acid + H(+). PLA2 catalyzes the calcium-dependent hydrolysis of the 2-acyl groups in 3-sn-phosphoglycerides. This is Basic phospholipase A2 PA-10A from Pseudechis australis (Mulga snake).